We begin with the raw amino-acid sequence, 346 residues long: Putative aquaporin-7B (346 aa).

Over 1 to 40 (MVQASGHRRSTRGSKMVSWSVIAKIQEIWCEEDERKMVRE) the chain is Cytoplasmic. The helical transmembrane segment at 41–58 (FLAEFMSTYVMMVFGLGS) threads the bilayer. Over 59–71 (VAHMVLNKTYGSY) the chain is Extracellular. A helical membrane pass occupies residues 72–89 (LGVNLGFGFGVTMGVHVA). Over 90-93 (GRIS) the chain is Cytoplasmic. Residues 94–107 (GAHMNAAVTFTNCA) constitute an intramembrane region (discontinuously helical). Positions 98–100 (NAA) match the NPA 1 motif. Over 108 to 115 (LGRVPWRK) the chain is Cytoplasmic. The chain crosses the membrane as a helical span at residues 116–136 (FPVHVLGQFLGSFLAAATIYS). Over 137–174 (LFYTAILHFSGGELMVTGPFATAGIFATYLPDHMTLWR) the chain is Extracellular. Residues 175–192 (GFLNEEWLTRMLQLCLFT) form a helical membrane-spanning segment. The Cytoplasmic segment spans residues 193–204 (ITDQENNPALPG). A helical membrane pass occupies residues 205 to 221 (THALVISILVVIIRVSH). At 222–225 (GINT) the chain is on the extracellular side. Positions 226 to 239 (GYAINPSRDPPPSI) form an intramembrane region, discontinuously helical. An NPA 2 motif is present at residues 230-232 (NPS). The Extracellular segment spans residues 240 to 257 (FTFIAGWGKQVFSDGENW). The chain crosses the membrane as a helical span at residues 258-279 (WWVPVVAPLLGASLGGIIYLVF). The Cytoplasmic portion of the chain corresponds to 280-346 (IGSTIPREPL…LHESMALEHF (67 aa)).

Belongs to the MIP/aquaporin (TC 1.A.8) family. As to quaternary structure, homotetramer; each monomer provides an independent glycerol/water pore.

The protein localises to the membrane. The catalysed reaction is glycerol(in) = glycerol(out). The enzyme catalyses H2O(in) = H2O(out). Aquaglyceroporins form homotetrameric transmembrane channels, with each monomer independently mediating glycerol and water transport across the plasma membrane along their osmotic gradient. The polypeptide is Putative aquaporin-7B (Homo sapiens (Human)).